A 319-amino-acid polypeptide reads, in one-letter code: Forkhead box protein E3 (319 aa).

The segment at 1–69 is disordered; the sequence is MAGRSDMDPP…GRRRRRPLQR (69 aa). The span at 44-53 shows a compositional bias: low complexity; that stretch reads AAAGRGEAAP. The segment at residues 71 to 165 is a DNA-binding region (fork-head); sequence KPPYSYIALI…DNGSFLRRRK (95 aa).

It is found in the nucleus. Functionally, transcription factor that controls lens epithelial cell growth through regulation of proliferation, apoptosis and cell cycle. During lens development, controls the ratio of the lens fiber cells to the cells of the anterior lens epithelium by regulating the rate of proliferation and differentiation. Controls lens vesicle closure and subsequent separation of the lens vesicle from ectoderm. Controls the expression of DNAJB1 in a pathway that is crucial for the development of the anterior segment of the eye. This Homo sapiens (Human) protein is Forkhead box protein E3 (FOXE3).